We begin with the raw amino-acid sequence, 108 residues long: Nucleoid-associated protein CPS_3743 (108 aa).

The segment at 87–108 is disordered; the sequence is NKDKMGALTGGMQLPPGMKMPF.

The protein belongs to the YbaB/EbfC family. In terms of assembly, homodimer.

Its subcellular location is the cytoplasm. The protein resides in the nucleoid. Binds to DNA and alters its conformation. May be involved in regulation of gene expression, nucleoid organization and DNA protection. In Colwellia psychrerythraea (strain 34H / ATCC BAA-681) (Vibrio psychroerythus), this protein is Nucleoid-associated protein CPS_3743.